We begin with the raw amino-acid sequence, 290 residues long: Acetyl-coenzyme A carboxylase carboxyl transferase subunit beta (290 aa).

In terms of domain architecture, CoA carboxyltransferase N-terminal spans 28 to 290 (VMTKCPQCKK…KGGEEGWWRN (263 aa)). 4 residues coordinate Zn(2+): cysteine 32, cysteine 35, cysteine 51, and cysteine 54. A C4-type zinc finger spans residues 32–54 (CPQCKKIMYTKELIKNLRVCLSC).

It belongs to the AccD/PCCB family. Acetyl-CoA carboxylase is a heterohexamer composed of biotin carboxyl carrier protein (AccB), biotin carboxylase (AccC) and two subunits each of ACCase subunit alpha (AccA) and ACCase subunit beta (AccD). Zn(2+) serves as cofactor.

The protein localises to the cytoplasm. It carries out the reaction N(6)-carboxybiotinyl-L-lysyl-[protein] + acetyl-CoA = N(6)-biotinyl-L-lysyl-[protein] + malonyl-CoA. It functions in the pathway lipid metabolism; malonyl-CoA biosynthesis; malonyl-CoA from acetyl-CoA: step 1/1. Functionally, component of the acetyl coenzyme A carboxylase (ACC) complex. Biotin carboxylase (BC) catalyzes the carboxylation of biotin on its carrier protein (BCCP) and then the CO(2) group is transferred by the transcarboxylase to acetyl-CoA to form malonyl-CoA. In Geobacillus kaustophilus (strain HTA426), this protein is Acetyl-coenzyme A carboxylase carboxyl transferase subunit beta.